We begin with the raw amino-acid sequence, 1875 residues long: MTQVEGLSTWNPAFRPEDNESIITNNLAQLVLDPESRPAEVSPVDVHTSPFGDDADVENETHVLESPLPSEPQDAPAPVATDSDPSQNADPITELKDVLEQPRHIDGNDSSIHPDDTQVAENVAEYVSTQPEDDKEQANGLHLGNTVAEGMSAEHDKDEHTSGLHLGNSVAEASHFSAPEEFSGVETSGNGLHFRAVKGDTSWIDGDEVEEDKDAMPHGEISNDRPGFWGNLGNDGRDNEDDFFDQLKTQTKPIYVPPETESRFEEGVPLLDNSPQTPVEQAQRGDNQLDNVFAGDEDDEGDFFNEIQKSTPEEGPFHITRKSTTQVLSTLDTTPDSPFSETSPTAQDFNQILADTSAQNETKEPSDADLAARWQAELSDDAEETMPPEDDLAARWQAELDDDDDDLLLDEASTANNDQEAAQLNQDHNAGFAASLQSPFGTPENPARPKAQPISYTPHQPSTSDLLQGIPAQAPVPQPHNAPTSNYFTAQAPPNPVTTRAESFAERSKEGYKSPYDLPEDLARPRRPVVSKQVIPQPGNLPPPPPRSSSIPAPSPQPSKAPAGVLGTSPKQPVAAVTPKNFYEELPLPPPRPKSRPASSGRYTPNPTSAPPPAPLSVPQSIPAPANPYASIPLAPKSAGDLQSPPELHQPEKLDPYSSLLAPAALGAPVVPGAQSRYSPKPPGLQAGTKPLPSPRYSPAPPASTVVAGAPPPRNRYASQPSSISGPGAVLPFQPRTSSPLAHHEKISYHPPGVSEERRRSEPAAGLPPPSHAQPFQPPVIPESQGPVDAGIHENVQPSVTQPNSPPRNPYAPSAYVNEFAKRVAPVQNDLPSIGTQNVAYAPPVGESPFVPPRRSQTQSPSQQLLSPRLSLPPIDPLQRPASVHGATSPTKTVNPYAPAQVSLHNRALSQSLDFIPPTDGQQLDPLERWKGAPIVKFGFGGIVTSCFPKHIPRYSAGQAAPMIKSCPGEIKICPLNDRLPPAESIVQYPGPLKNKSKKKDLLAWLSSKIAAFENEGDPSFDPTQPDITKRHEEKILLWKIVRFLVEHDGALEGSAEAQKSLRSVMFPHLQQSTTDQVPGDSFIPAATPQAIDASARSDAADSHSIESLRDSLVLGEREKAVWAAVDNRLWGHAMIIASTMDRSVWKQVVQEFVRREVRSTTSRTESLAAFYEILAGNVEESIDELVPPSARAGLQMISKVDGQGPAKNTLDGLESWRETLGLVLSNRSPDDQRALLALGQLLLSYGRTEAAHICFIVSRAAVFGGIDDPQANIVLLGVDHHRLASSAPLHNDDSILLTEAYEYATSVLAGSPMNTLPYLLAFKLIHAWSLADQGRKSEAQQYCDAIAAALKAATKPSGYHNPHLFYGVDELSARLRQTASDAGSSWITRPSMEKVSGSMWAKFNSFVAGEESDAASTGSGKAEEIGPFAKVSGTPTVSRSPSVSDIYGSYPMGGAQSAPNTGASRYHPVNQYALSSSPEQLRGRSSLDSQRSSSYGFPPPQRRGSQEPSTPVEMNIYQGMPTYGSPSAAGYQSTPPQTSYMPLAPVEEDSAAYSPPDPQPAPSQTLDNVSPYQPAHYAPESFGQPFETNDASATSQFEQGGYMPPSSGGGYEPPFVEVNPASASDDVEDESNEGAKPKKKSFMDEDDDDDMAARAAAIQKAERARRDREADEAFRKAAEADAQKPPPTTAKKGWFTGWFGGKKEENNSGGGPIRAKLGEENSFYYDKELKKWVNKKDPGSSTPARGTPPPPRGSAPPSRTASGTGGPPPPAVGTPPLAALGAGSRPSSSAGVPPRLTSSPAPSALGAPPPIPRSVSTSATLPTPPDGSAGAPPRPATSLSYASSIDDLLGAPQARKGPAARGKKKGRYVDVMAK.

7 disordered regions span residues 34–140 (PESR…QANG), 211–241 (EDKD…DNED), 258–814 (PETE…YAPS), 835–868 (GTQN…LLSP), 1413–1443 (SDAA…RSPS), 1475–1717 (LSSS…IRAK), and 1733–1875 (WVNK…VMAK). Basic and acidic residues-rich tracts occupy residues 93–116 (TELK…HPDD) and 214–223 (DAMPHGEISN). Polar residues-rich tracts occupy residues 273 to 290 (NSPQ…NQLD) and 322 to 360 (KSTT…SAQN). Acidic residues-rich tracts occupy residues 378 to 391 (LSDD…PEDD) and 399 to 409 (ELDDDDDDLLL). Polar residues-rich tracts occupy residues 413–428 (STAN…NQDH) and 454–466 (ISYT…TSDL). The segment covering 503 to 512 (SFAERSKEGY) has biased composition (basic and acidic residues). Pro residues predominate over residues 539–559 (GNLPPPPPRSSSIPAPSPQPS). Low complexity-rich tracts occupy residues 596-607 (RPASSGRYTPNP) and 660-674 (LLAP…VPGA). 2 stretches are compositionally biased toward pro residues: residues 692 to 702 (LPSPRYSPAPP) and 766 to 781 (GLPP…PPVI). The span at 853–868 (PRRSQTQSPSQQLLSP) shows a compositional bias: low complexity. Residues 1434 to 1443 (GTPTVSRSPS) show a composition bias toward polar residues. Positions 1484-1495 (GRSSLDSQRSSS) are enriched in low complexity. 3 stretches are compositionally biased toward polar residues: residues 1531–1541 (GYQSTPPQTSY), 1563–1572 (PSQTLDNVSP), and 1587–1599 (FETN…SQFE). The segment covering 1661–1683 (KAERARRDREADEAFRKAAEADA) has biased composition (basic and acidic residues). The segment covering 1775–1785 (TPPLAALGAGS) has biased composition (low complexity).

The protein belongs to the SEC16 family.

It localises to the endoplasmic reticulum membrane. Its function is as follows. Involved in the initiation of assembly of the COPII coat required for the formation of transport vesicles from the endoplasmic reticulum (ER) and the selection of cargo molecules. Also involved in autophagy. The polypeptide is COPII coat assembly protein sec16 (sec16) (Aspergillus clavatus (strain ATCC 1007 / CBS 513.65 / DSM 816 / NCTC 3887 / NRRL 1 / QM 1276 / 107)).